Reading from the N-terminus, the 960-residue chain is Probable glutamyl endopeptidase, chloroplastic (960 aa).

A chloroplast-targeting transit peptide spans 1–62; sequence MMRFHKACHR…FSENPLTTVM (62 aa). The segment at 78 to 98 is disordered; it reads SGGAEDGGGTSNGSLSASATA. The span at 89–98 shows a compositional bias: polar residues; the sequence is NGSLSASATA. Residues Ser780, Asp854, and His888 each act as charge relay system in the active site. The segment at 915–960 is disordered; it reads TSDADTSPDQSKEGSDSADKVSTGTGGGNPEFGEHEVHSKLRRSLL. Residues 924–933 show a composition bias toward basic and acidic residues; that stretch reads QSKEGSDSAD.

It belongs to the peptidase S9D family.

It is found in the plastid. The protein localises to the chloroplast stroma. Its function is as follows. Serine-type protease active in vitro against the LHCII N-terminal. Cleaves its substrate on the carboxy-side of Glu residues. This is Probable glutamyl endopeptidase, chloroplastic (GEP) from Arabidopsis thaliana (Mouse-ear cress).